A 141-amino-acid chain; its full sequence is Large ribosomal subunit protein uL11 (141 aa).

It belongs to the universal ribosomal protein uL11 family. In terms of assembly, part of the ribosomal stalk of the 50S ribosomal subunit. Interacts with L10 and the large rRNA to form the base of the stalk. L10 forms an elongated spine to which L12 dimers bind in a sequential fashion forming a multimeric L10(L12)X complex. One or more lysine residues are methylated.

Functionally, forms part of the ribosomal stalk which helps the ribosome interact with GTP-bound translation factors. The protein is Large ribosomal subunit protein uL11 of Prochlorococcus marinus (strain MIT 9515).